We begin with the raw amino-acid sequence, 282 residues long: UDP-3-O-acyl-N-acetylglucosamine deacetylase (282 aa).

Zn(2+) is bound by residues His74, His226, and Asp230. The Proton donor role is filled by His253.

Belongs to the LpxC family. Requires Zn(2+) as cofactor.

The catalysed reaction is a UDP-3-O-[(3R)-3-hydroxyacyl]-N-acetyl-alpha-D-glucosamine + H2O = a UDP-3-O-[(3R)-3-hydroxyacyl]-alpha-D-glucosamine + acetate. It functions in the pathway glycolipid biosynthesis; lipid IV(A) biosynthesis; lipid IV(A) from (3R)-3-hydroxytetradecanoyl-[acyl-carrier-protein] and UDP-N-acetyl-alpha-D-glucosamine: step 2/6. Catalyzes the hydrolysis of UDP-3-O-myristoyl-N-acetylglucosamine to form UDP-3-O-myristoylglucosamine and acetate, the committed step in lipid A biosynthesis. This Aquifex aeolicus (strain VF5) protein is UDP-3-O-acyl-N-acetylglucosamine deacetylase.